The primary structure comprises 215 residues: UPF0502 protein YceH (215 aa).

The residue at position 80 (Lys80) is an N6-acetyllysine.

Belongs to the UPF0502 family.

In Escherichia coli O127:H6 (strain E2348/69 / EPEC), this protein is UPF0502 protein YceH.